Consider the following 104-residue polypeptide: Circadian clock oscillator protein KaiB (104 aa).

The protein belongs to the KaiB family. The KaiABC complex composition changes during the circadian cycle to control KaiC phosphorylation. Complexes KaiC(6), KaiA(2-4):KaiC(6), KaiB(6):KaiC(6) and KaiC(6):KaiB(6):KaiA(12) are among the most important forms, many form cooperatively. Undergoes a major conformational rearrangment; in the free state forms homotetramers as a dimer of dimers. When bound to the CI domain of KaiC switches to a monomeric thioredoxin-fold (KaiB(fs)). KaiB(fs) binds CikA, leading it to dephosphorylate phospho-RpaA.

Key component of the KaiABC oscillator complex, which constitutes the main circadian regulator in cyanobacteria. Complex composition changes during the circadian cycle to control KaiC phosphorylation. KaiA stimulates KaiC autophosphorylation, while KaiB sequesters KaiA, leading to KaiC autodephosphorylation. Phospho-Ser-431 KaiC accumulation triggers binding of KaiB to form the KaiB(6):KaiC(6) complex, leading to changes in output regulators CikA and SasA. KaiB switches to a thioredoxin-like fold (KaiB(fs)) when bound to KaiC. KaiB(6):KaiC(6) formation exposes a site for KaiA binding that sequesters KaiA from KaiC, making the KaiC(6):KaiB(6):KaiA(12) complex that results in KaiC autodephosphorylation. In terms of biological role, a metamorphic protein which reversibly switches between an inactive tetrameric fold and a rare, thioredoxin-like monomeric fold (KaiB(fs)). KaiB(fs) binds phospho-KaiC, KaiA and CikA. KaiA and CikA compete for binding to KaiB(fs), and KaiB(fs) and SasA compete for binding to KaiC, thus the clock oscillator and output signal pathway are tightly coupled. The chain is Circadian clock oscillator protein KaiB from Rippkaea orientalis (strain PCC 8801 / RF-1) (Cyanothece sp. (strain PCC 8801)).